The following is a 229-amino-acid chain: MNQLEQKLEQDFGIVFSQKDLLETAFTHTSYANEHRLLNISHNERLEFLGDAALQLVISVYLYNRYPNKPEGEMSKMRSTIVREESLAGFTKACGFEQYIRLGKGEEKSGGRERATILGDLWEAFLGALYLDQGLPAVEKFLNQVMIPQVEKGNFDRVIDYKTALQERLQVNGKVDITYTVIDESGPAHAKEFTMQVAVDGKELSTGFGKSKKLAEQAAAKSALEQLGN.

The RNase III domain occupies 5–134 (EQKLEQDFGI…FLGALYLDQG (130 aa)). E47 lines the Mg(2+) pocket. Residue D51 is part of the active site. Mg(2+) is bound by residues D120 and E123. Residue E123 is part of the active site. Residues 160–229 (DYKTALQERL…AKSALEQLGN (70 aa)) form the DRBM domain.

The protein belongs to the ribonuclease III family. As to quaternary structure, homodimer. The cofactor is Mg(2+).

Its subcellular location is the cytoplasm. It catalyses the reaction Endonucleolytic cleavage to 5'-phosphomonoester.. In terms of biological role, digests double-stranded RNA. Involved in the processing of primary rRNA transcript to yield the immediate precursors to the large and small rRNAs (23S and 16S). Also processes some mRNAs, and tRNAs when they are encoded in the rRNA operon. CRISPR (clustered regularly interspaced short palindromic repeat) is an adaptive immune system that provides protection against mobile genetic elements (viruses, transposable elements and conjugative plasmids). CRISPR clusters contain spacers, sequences complementary to antecedent mobile elements, and target invading nucleic acids. CRISPR clusters are transcribed and processed into CRISPR RNA (crRNA). In this organism endogenous ribonuclease 3 and Cas9 are required for correct coprocessing of pre-crRNA and the trans-encoded small RNA (tracrRNA). Cas9, crRNA and tracrRNA are required for cleavage of invading DNA. Complements pre-crRNA and tracRNA coprocessing defects in an rnc deletion in S.pyogenes strain 370. In Streptococcus thermophilus (strain ATCC BAA-491 / LMD-9), this protein is Ribonuclease 3.